The primary structure comprises 341 residues: L-threonine 3-dehydrogenase (341 aa).

C38 serves as a coordination point for Zn(2+). Catalysis depends on charge relay system residues T40 and H43. 6 residues coordinate Zn(2+): H63, E64, C93, C96, C99, and C107. NAD(+) contacts are provided by residues I175, D195, R200, 262-264 (LGI), and 286-287 (IY).

It belongs to the zinc-containing alcohol dehydrogenase family. As to quaternary structure, homotetramer. Zn(2+) is required as a cofactor.

The protein localises to the cytoplasm. The catalysed reaction is L-threonine + NAD(+) = (2S)-2-amino-3-oxobutanoate + NADH + H(+). The protein operates within amino-acid degradation; L-threonine degradation via oxydo-reductase pathway; glycine from L-threonine: step 1/2. Functionally, catalyzes the NAD(+)-dependent oxidation of L-threonine to 2-amino-3-ketobutyrate. This is L-threonine 3-dehydrogenase from Salmonella typhi.